The chain runs to 399 residues: Elongation factor Tu (399 aa).

The region spanning 10–209 is the tr-type G domain; that stretch reads KPHVNIGTIG…AVDEYIPTPE (200 aa). Residues 19-26 form a G1 region; it reads GHVDHGKT. Residue 19–26 participates in GTP binding; the sequence is GHVDHGKT. Thr-26 lines the Mg(2+) pocket. The G2 stretch occupies residues 60 to 64; sequence GITIA. The tract at residues 81–84 is G3; sequence DCPG. Residues 81 to 85 and 136 to 139 contribute to the GTP site; these read DCPGH and NKED. The G4 stretch occupies residues 136–139; the sequence is NKED. The tract at residues 174–176 is G5; sequence SAL.

This sequence belongs to the TRAFAC class translation factor GTPase superfamily. Classic translation factor GTPase family. EF-Tu/EF-1A subfamily. Monomer.

It localises to the cytoplasm. The enzyme catalyses GTP + H2O = GDP + phosphate + H(+). GTP hydrolase that promotes the GTP-dependent binding of aminoacyl-tRNA to the A-site of ribosomes during protein biosynthesis. This is Elongation factor Tu from Nitratiruptor sp. (strain SB155-2).